The following is a 76-amino-acid chain: Antimicrobial peptide Smp24 (76 aa).

An N-terminal signal peptide occupies residues 1 to 22; that stretch reads MQYKTFLVIFMAYLLVTHEAEA. A propeptide spanning residues 47–76 is cleaved from the precursor; that stretch reads SKRKRDVEDFFDPYQRDLDLELERLLSQLQ.

Belongs to the non-disulfide-bridged peptide (NDBP) superfamily. Medium-length antimicrobial peptide (group 3) family. Expressed by the venom gland.

The protein localises to the secreted. Its subcellular location is the target cell membrane. Peptide that shows antimicrobial activity, moderate cytolysis on eukaryote cells and interference with DNA synthesis. Has potent activity against Gram-positive bacteria and moderate activity against Gram-negative bacteria, as well as moderate activity against fungi. Acts by inducing bacterial membrane disruption. Uses multiple modes of action depending on the membrane lipid composition. Uses a toroidal pore mechanism against the prokaryotic like membrane and forms hexagonal phase non-lamellar structures in eukaryotic-like membrane. Shows activity against B.subtilis (MIC=4 ug/ml), S.epidermidis (MIC=8 ug/ml), S.aureus (MIC=8 ug/ml), E.coli (MIC=64 ug/ml), K.pneumoniae (MIC=128 ug/ml), P.aeruginosa (MIC=256 ug/ml), and C.albicans (MIC=32 ug/ml). Shows moderate hemolysis activity. This chain is Antimicrobial peptide Smp24, found in Scorpio palmatus (Israeli golden scorpion).